The chain runs to 79 residues: Metallothionein-like protein type 2 (79 aa).

The protein belongs to the metallothionein superfamily. Type 15 family.

In terms of biological role, metallothioneins have a high content of cysteine residues that bind various heavy metals. In Malus domestica (Apple), this protein is Metallothionein-like protein type 2 (MT1).